The chain runs to 369 residues: 2-aminoethylphosphonate--pyruvate transaminase (369 aa).

K193 is subject to N6-(pyridoxal phosphate)lysine.

This sequence belongs to the class-V pyridoxal-phosphate-dependent aminotransferase family. PhnW subfamily. As to quaternary structure, homodimer. Requires pyridoxal 5'-phosphate as cofactor.

It catalyses the reaction (2-aminoethyl)phosphonate + pyruvate = phosphonoacetaldehyde + L-alanine. In terms of biological role, involved in phosphonate degradation. The polypeptide is 2-aminoethylphosphonate--pyruvate transaminase (Burkholderia thailandensis (strain ATCC 700388 / DSM 13276 / CCUG 48851 / CIP 106301 / E264)).